Consider the following 224-residue polypeptide: MTSFGIIVFPGSNCDRDIATVTAGLLDQPTRFIWHQETDLHGVDVVVLPGGFSYGDYLRCGAIARFSPIMTAIIDHANAGKRVLGICNGFQVLTEVGLLPGALIRNRDLHFICDRVTVRVESNQTVWTKGYQSQQVITLPIAHGEGRYFADGDTLKALEDNEQILFRYSNAQGELTTDSNPNGSLHNIAGITNVQGNVLGMMPHPERAADRLLKATDGLAMFIS.

The region spanning 4–224 (FGIIVFPGSN…ATDGLAMFIS (221 aa)) is the Glutamine amidotransferase type-1 domain. Catalysis depends on Cys-87, which acts as the Nucleophile. Active-site residues include His-204 and Glu-206.

Part of the FGAM synthase complex composed of 1 PurL, 1 PurQ and 2 PurS subunits.

It localises to the cytoplasm. The catalysed reaction is N(2)-formyl-N(1)-(5-phospho-beta-D-ribosyl)glycinamide + L-glutamine + ATP + H2O = 2-formamido-N(1)-(5-O-phospho-beta-D-ribosyl)acetamidine + L-glutamate + ADP + phosphate + H(+). It catalyses the reaction L-glutamine + H2O = L-glutamate + NH4(+). Its pathway is purine metabolism; IMP biosynthesis via de novo pathway; 5-amino-1-(5-phospho-D-ribosyl)imidazole from N(2)-formyl-N(1)-(5-phospho-D-ribosyl)glycinamide: step 1/2. Part of the phosphoribosylformylglycinamidine synthase complex involved in the purines biosynthetic pathway. Catalyzes the ATP-dependent conversion of formylglycinamide ribonucleotide (FGAR) and glutamine to yield formylglycinamidine ribonucleotide (FGAM) and glutamate. The FGAM synthase complex is composed of three subunits. PurQ produces an ammonia molecule by converting glutamine to glutamate. PurL transfers the ammonia molecule to FGAR to form FGAM in an ATP-dependent manner. PurS interacts with PurQ and PurL and is thought to assist in the transfer of the ammonia molecule from PurQ to PurL. The protein is Phosphoribosylformylglycinamidine synthase subunit PurQ of Synechocystis sp. (strain ATCC 27184 / PCC 6803 / Kazusa).